The sequence spans 76 residues: Small ribosomal subunit protein bS18 (76 aa).

Belongs to the bacterial ribosomal protein bS18 family. In terms of assembly, part of the 30S ribosomal subunit. Forms a tight heterodimer with protein bS6.

Binds as a heterodimer with protein bS6 to the central domain of the 16S rRNA, where it helps stabilize the platform of the 30S subunit. The polypeptide is Small ribosomal subunit protein bS18 (Aeromonas hydrophila subsp. hydrophila (strain ATCC 7966 / DSM 30187 / BCRC 13018 / CCUG 14551 / JCM 1027 / KCTC 2358 / NCIMB 9240 / NCTC 8049)).